The sequence spans 163 residues: Protein-export protein SecB (163 aa).

The protein belongs to the SecB family. As to quaternary structure, homotetramer, a dimer of dimers. One homotetramer interacts with 1 SecA dimer.

It localises to the cytoplasm. Functionally, one of the proteins required for the normal export of preproteins out of the cell cytoplasm. It is a molecular chaperone that binds to a subset of precursor proteins, maintaining them in a translocation-competent state. It also specifically binds to its receptor SecA. This chain is Protein-export protein SecB, found in Brucella abortus (strain S19).